Here is a 308-residue protein sequence, read N- to C-terminus: D-alanine--D-alanine ligase (308 aa).

The ATP-grasp domain maps to 108–303 (KLVWKAAGLP…YEALCLKVLE (196 aa)). ATP is bound at residue 134-189 (EAELGLPMFVKPACEGSSLGVTKVRKAGELAQAYAEARKFDPLVLAEQFVGGGEYT). Aspartate 257, glutamate 270, and asparagine 272 together coordinate Mg(2+).

The protein belongs to the D-alanine--D-alanine ligase family. Mg(2+) serves as cofactor. Mn(2+) is required as a cofactor.

Its subcellular location is the cytoplasm. It carries out the reaction 2 D-alanine + ATP = D-alanyl-D-alanine + ADP + phosphate + H(+). It participates in cell wall biogenesis; peptidoglycan biosynthesis. Its function is as follows. Cell wall formation. The polypeptide is D-alanine--D-alanine ligase (Laribacter hongkongensis (strain HLHK9)).